We begin with the raw amino-acid sequence, 189 residues long: Cancer/testis antigen family 45 member A10 (189 aa).

Belongs to the CT45 family.

Its subcellular location is the nucleus. The polypeptide is Cancer/testis antigen family 45 member A10 (Homo sapiens (Human)).